The sequence spans 341 residues: LRP2-binding protein (341 aa).

A TPR repeat occupies 56–89 (VQANFLLGQLFFEEGWYEDALLQFEKVKDEDNQA). 6 Sel1-like repeats span residues 90–122 (LYQA…TSDC), 130–165 (YAAA…DNGN), 170–203 (LKAQ…GNGS), 204–239 (LESQ…ERGN), 240–271 (VYAQ…SHDN), and 291–326 (AIAT…QLDA).

The protein localises to the cytoplasm. May act as an adapter that regulates LRP2 function. The sequence is that of LRP2-binding protein (lrp2bp) from Xenopus laevis (African clawed frog).